A 402-amino-acid chain; its full sequence is NADH-quinone oxidoreductase subunit D 2 (402 aa).

It belongs to the complex I 49 kDa subunit family. In terms of assembly, NDH-1 is composed of 14 different subunits. Subunits NuoB, C, D, E, F, and G constitute the peripheral sector of the complex.

The protein localises to the cell inner membrane. It catalyses the reaction a quinone + NADH + 5 H(+)(in) = a quinol + NAD(+) + 4 H(+)(out). NDH-1 shuttles electrons from NADH, via FMN and iron-sulfur (Fe-S) centers, to quinones in the respiratory chain. The immediate electron acceptor for the enzyme in this species is believed to be ubiquinone. Couples the redox reaction to proton translocation (for every two electrons transferred, four hydrogen ions are translocated across the cytoplasmic membrane), and thus conserves the redox energy in a proton gradient. The polypeptide is NADH-quinone oxidoreductase subunit D 2 (Nitrobacter hamburgensis (strain DSM 10229 / NCIMB 13809 / X14)).